Here is a 564-residue protein sequence, read N- to C-terminus: Efflux pump hmp6 (564 aa).

Positions 1 to 25 (MEKHAEPEKSLGDKEFQEKELHEKP) are enriched in basic and acidic residues. A disordered region spans residues 1–46 (MEKHAEPEKSLGDKEFQEKELHEKPAPAASEDISGDSSVNKEDGPD). 8 helical membrane passes run 58–78 (LAVV…DTTI), 96–118 (VGWY…GKLY), 125–145 (IVFT…GVAP), 156–176 (IAGL…IHSV), 186–206 (GMIV…GGAF), 214–234 (WCFY…LFFF), 259–279 (FGTF…QMGG), and 289–309 (IIVL…VQFF). N-linked (GlcNAc...) asparagine glycans are attached at residues Asn-312 and Asn-322. 4 helical membrane passes run 330-350 (IYMF…PIWF), 361-383 (SGIR…GALV), 395-415 (ASVV…VDAS), and 452-472 (IGTA…VSAA).

The protein belongs to the major facilitator superfamily. TCR/Tet family.

The protein localises to the cell membrane. In terms of biological role, efflux pump that might be required for efficient secretion of hypothemycin or other secondary metabolies produced by the hypothemycin gene cluster. This is Efflux pump hmp6 from Hypomyces subiculosus (Nectria subiculosa).